The sequence spans 456 residues: tRNA(Ile)-lysidine synthase (456 aa).

27–32 (SGGVDS) contacts ATP.

The protein belongs to the tRNA(Ile)-lysidine synthase family.

It localises to the cytoplasm. It carries out the reaction cytidine(34) in tRNA(Ile2) + L-lysine + ATP = lysidine(34) in tRNA(Ile2) + AMP + diphosphate + H(+). Functionally, ligates lysine onto the cytidine present at position 34 of the AUA codon-specific tRNA(Ile) that contains the anticodon CAU, in an ATP-dependent manner. Cytidine is converted to lysidine, thus changing the amino acid specificity of the tRNA from methionine to isoleucine. The sequence is that of tRNA(Ile)-lysidine synthase from Vibrio atlanticus (strain LGP32) (Vibrio splendidus (strain Mel32)).